The sequence spans 484 residues: uncharacterized protein (484 aa).

Residues 334 to 484 enclose the N-acetyltransferase domain; the sequence is IIIRQITDND…ENEWIYEVNL (151 aa).

This is an uncharacterized protein from Methanocaldococcus jannaschii (strain ATCC 43067 / DSM 2661 / JAL-1 / JCM 10045 / NBRC 100440) (Methanococcus jannaschii).